The following is a 176-amino-acid chain: Thiol:disulfide interchange protein HelX (176 aa).

Positions 1-19 (MAKPLMFLPLLVMAGFVGA) are cleaved as a signal peptide. Residues 35–172 (ALAGKEAPAV…ITKKIDPLLA (138 aa)) enclose the Thioredoxin domain. Cysteines 75 and 78 form a disulfide.

The protein belongs to the thioredoxin family. DsbE subfamily.

It is found in the periplasm. In terms of biological role, required for disulfide bond formation in some periplasmic proteins. Also acts as a disulfide oxidoreductase in cytochromes c biogenesis. The cysteines of apocytochromes c must be in the reduced state for covalent linkage between the two moieties to occur. The chain is Thiol:disulfide interchange protein HelX (helX) from Rhodobacter capsulatus (strain ATCC BAA-309 / NBRC 16581 / SB1003).